A 325-amino-acid polypeptide reads, in one-letter code: ADP-L-glycero-D-manno-heptose-6-epimerase (325 aa).

Residues 10 to 11 (FI), 31 to 32 (DD), Lys38, and 75 to 79 (EGACS) contribute to the NADP(+) site. Residue Tyr139 is the Proton acceptor of the active site. NADP(+) is bound at residue Lys143. A substrate-binding site is contributed by Asn167. 2 residues coordinate NADP(+): Val168 and Lys176. Lys176 acts as the Proton acceptor in catalysis. Residues Ser178, His185, 199–202 (FEGS), Arg212, and Tyr285 each bind substrate.

Belongs to the NAD(P)-dependent epimerase/dehydratase family. HldD subfamily. Homopentamer. NADP(+) serves as cofactor.

It carries out the reaction ADP-D-glycero-beta-D-manno-heptose = ADP-L-glycero-beta-D-manno-heptose. The protein operates within nucleotide-sugar biosynthesis; ADP-L-glycero-beta-D-manno-heptose biosynthesis; ADP-L-glycero-beta-D-manno-heptose from D-glycero-beta-D-manno-heptose 7-phosphate: step 4/4. Functionally, catalyzes the interconversion between ADP-D-glycero-beta-D-manno-heptose and ADP-L-glycero-beta-D-manno-heptose via an epimerization at carbon 6 of the heptose. This chain is ADP-L-glycero-D-manno-heptose-6-epimerase, found in Azoarcus sp. (strain BH72).